The following is an 84-amino-acid chain: Sulfur carrier protein TusA (84 aa).

C19 functions as the Cysteine persulfide intermediate in the catalytic mechanism.

The protein belongs to the sulfur carrier protein TusA family. In terms of assembly, interacts with IscS.

Its subcellular location is the cytoplasm. It participates in tRNA modification. In terms of biological role, sulfur carrier protein involved in sulfur trafficking in the cell. Part of a sulfur-relay system required for 2-thiolation during synthesis of 2-thiouridine of the modified wobble base 5-methylaminomethyl-2-thiouridine (mnm(5)s(2)U) in tRNA. Interacts with IscS and stimulates its cysteine desulfurase activity. Accepts an activated sulfur from IscS, which is then transferred to TusD, and thus determines the direction of sulfur flow from IscS to 2-thiouridine formation. Also appears to be involved in sulfur transfer for the biosynthesis of molybdopterin. This chain is Sulfur carrier protein TusA, found in Sodalis glossinidius (strain morsitans).